The following is a 225-amino-acid chain: NAD(P)H-quinone oxidoreductase subunit K, chloroplastic (225 aa).

Cys43, Cys44, Cys108, and Cys139 together coordinate [4Fe-4S] cluster.

The protein belongs to the complex I 20 kDa subunit family. In terms of assembly, NDH is composed of at least 16 different subunits, 5 of which are encoded in the nucleus. The cofactor is [4Fe-4S] cluster.

It localises to the plastid. It is found in the chloroplast thylakoid membrane. The enzyme catalyses a plastoquinone + NADH + (n+1) H(+)(in) = a plastoquinol + NAD(+) + n H(+)(out). The catalysed reaction is a plastoquinone + NADPH + (n+1) H(+)(in) = a plastoquinol + NADP(+) + n H(+)(out). Functionally, NDH shuttles electrons from NAD(P)H:plastoquinone, via FMN and iron-sulfur (Fe-S) centers, to quinones in the photosynthetic chain and possibly in a chloroplast respiratory chain. The immediate electron acceptor for the enzyme in this species is believed to be plastoquinone. Couples the redox reaction to proton translocation, and thus conserves the redox energy in a proton gradient. In Nymphaea alba (White water-lily), this protein is NAD(P)H-quinone oxidoreductase subunit K, chloroplastic.